The sequence spans 187 residues: Probable nicotinate-nucleotide adenylyltransferase (187 aa).

This sequence belongs to the NadD family.

It carries out the reaction nicotinate beta-D-ribonucleotide + ATP + H(+) = deamido-NAD(+) + diphosphate. The protein operates within cofactor biosynthesis; NAD(+) biosynthesis; deamido-NAD(+) from nicotinate D-ribonucleotide: step 1/1. Its function is as follows. Catalyzes the reversible adenylation of nicotinate mononucleotide (NaMN) to nicotinic acid adenine dinucleotide (NaAD). The polypeptide is Probable nicotinate-nucleotide adenylyltransferase (Anaeromyxobacter dehalogenans (strain 2CP-1 / ATCC BAA-258)).